Consider the following 340-residue polypeptide: Protein-arginine kinase (340 aa).

One can recognise a Phosphagen kinase C-terminal domain in the interval 21-242 (VVLSSRIRLA…EQIIMQERVA (222 aa)). ATP is bound by residues 24–28 (SSRIR), H79, R113, 164–168 (RASVM), and 195–200 (RGIYGE).

Belongs to the ATP:guanido phosphotransferase family.

The enzyme catalyses L-arginyl-[protein] + ATP = N(omega)-phospho-L-arginyl-[protein] + ADP + H(+). In terms of biological role, catalyzes the specific phosphorylation of arginine residues in proteins. The polypeptide is Protein-arginine kinase (Listeria innocua serovar 6a (strain ATCC BAA-680 / CLIP 11262)).